Reading from the N-terminus, the 644-residue chain is Exoribonuclease 2 (644 aa).

The RNB domain maps to 189-516 (RQDLTALNFV…NHRLLKAVIK (328 aa)). The region spanning 561-643 (NTRFAAEIID…ETRSIIARPA (83 aa)) is the S1 motif domain.

It belongs to the RNR ribonuclease family. RNase II subfamily.

The protein resides in the cytoplasm. The catalysed reaction is Exonucleolytic cleavage in the 3'- to 5'-direction to yield nucleoside 5'-phosphates.. In terms of biological role, involved in mRNA degradation. Hydrolyzes single-stranded polyribonucleotides processively in the 3' to 5' direction. The polypeptide is Exoribonuclease 2 (Salmonella dublin (strain CT_02021853)).